The following is a 161-amino-acid chain: uncharacterized protein (161 aa).

The chain crosses the membrane as a helical span at residues 76–94 (ISISSQCIFNVVILSFVFT).

Its subcellular location is the membrane. This is an uncharacterized protein from Saccharomyces cerevisiae (strain ATCC 204508 / S288c) (Baker's yeast).